Reading from the N-terminus, the 298-residue chain is Homoserine kinase (298 aa).

83–93 (PISRGLGSSSS) is a binding site for ATP.

Belongs to the GHMP kinase family. Homoserine kinase subfamily.

The protein resides in the cytoplasm. The catalysed reaction is L-homoserine + ATP = O-phospho-L-homoserine + ADP + H(+). It participates in amino-acid biosynthesis; L-threonine biosynthesis; L-threonine from L-aspartate: step 4/5. In terms of biological role, catalyzes the ATP-dependent phosphorylation of L-homoserine to L-homoserine phosphate. This chain is Homoserine kinase, found in Clostridium botulinum (strain Alaska E43 / Type E3).